The primary structure comprises 231 residues: MRIAVIGAMEEEVRILRDKLEQAETETVAGCEFTKGQLAGHEVILLKSGIGKVNAAMSTTILLEKYKPEKVINTGSAGGFHHSLNVGDVVISTEVRHHDVDVTAFNYEYGQVPGMPPGFKADEALVALAEKCMQAEENIQVVKGMIATGDSFMSDPNRVAAIRDKFENLYAVEMEAAAVAQVCHQYEVPFVIIRALSDIAGKESNVSFDQFLDQAALHSTNFIVKVLEELK.

The active-site Proton acceptor is the E12. Substrate-binding positions include G78, M153, and 174–175 (ME). D198 (proton donor) is an active-site residue.

The protein belongs to the PNP/UDP phosphorylase family. MtnN subfamily.

The enzyme catalyses S-adenosyl-L-homocysteine + H2O = S-(5-deoxy-D-ribos-5-yl)-L-homocysteine + adenine. The catalysed reaction is S-methyl-5'-thioadenosine + H2O = 5-(methylsulfanyl)-D-ribose + adenine. It catalyses the reaction 5'-deoxyadenosine + H2O = 5-deoxy-D-ribose + adenine. It participates in amino-acid biosynthesis; L-methionine biosynthesis via salvage pathway; S-methyl-5-thio-alpha-D-ribose 1-phosphate from S-methyl-5'-thioadenosine (hydrolase route): step 1/2. In terms of biological role, catalyzes the irreversible cleavage of the glycosidic bond in both 5'-methylthioadenosine (MTA) and S-adenosylhomocysteine (SAH/AdoHcy) to adenine and the corresponding thioribose, 5'-methylthioribose and S-ribosylhomocysteine, respectively. Also cleaves 5'-deoxyadenosine, a toxic by-product of radical S-adenosylmethionine (SAM) enzymes, into 5-deoxyribose and adenine. The sequence is that of 5'-methylthioadenosine/S-adenosylhomocysteine nucleosidase from Bacillus thuringiensis subsp. konkukian (strain 97-27).